The sequence spans 229 residues: Flagellar L-ring protein (229 aa).

A signal peptide spans 1–23 (MNPLTRVALAVAAFAALVLALSA). Residue C24 is the site of N-palmitoyl cysteine attachment. C24 carries the S-diacylglycerol cysteine lipid modification.

Belongs to the FlgH family. As to quaternary structure, the basal body constitutes a major portion of the flagellar organelle and consists of four rings (L,P,S, and M) mounted on a central rod.

Its subcellular location is the cell outer membrane. The protein resides in the bacterial flagellum basal body. Functionally, assembles around the rod to form the L-ring and probably protects the motor/basal body from shearing forces during rotation. In Anaeromyxobacter sp. (strain K), this protein is Flagellar L-ring protein.